A 298-amino-acid chain; its full sequence is Chitin deacetylase (298 aa).

Residues 1-16 form the signal peptide; sequence MLAPLFAALLAGAATA. One can recognise a NodB homology domain in the interval 39-222; sequence NTFALTFDDG…AIKAKGLTPV (184 aa). The active-site Proton acceptor is the D46. D46 lines the acetate pocket. Co(2+)-binding residues include D47, H99, and H103. Y140 contacts acetate. The active-site Proton donor is the H196. Residues 256-298 enclose the Chitin-binding type-1 domain; it reads DDTCGGSNGYVCQNSQCCSQWGWCGTTSEYCAAGCQAAYGPCT. 4 disulfide bridges follow: C259-C273, C267-C279, C272-C286, and C290-C297.

It belongs to the polysaccharide deacetylase family. Co(2+) is required as a cofactor.

The protein localises to the secreted. The enzyme catalyses [(1-&gt;4)-N-acetyl-beta-D-glucosaminyl](n) + n H2O = chitosan + n acetate. With respect to regulation, inhibited by Fe(2+) and to a lesser extent by Mn(2+). In terms of biological role, hydrolyzes the N-acetamido groups of N-acetyl-D-glucosamine polymers in chitin to form chitosan and acetate. May play a role in evasion of the host immune response; plant chitinases liberate chitin molecules from the fungal cell wall which act as elicitors of the plant immune response, deacetylation of the liberated chitin neutralizes elicitor activity. The polypeptide is Chitin deacetylase (Pestalotiopsis sp).